A 743-amino-acid chain; its full sequence is Phosphoribosylformylglycinamidine synthase subunit PurL (743 aa).

His50 is a catalytic residue. Tyr53 and Lys92 together coordinate ATP. Glu94 contacts Mg(2+). Residues Ser95–His98 and Arg117 each bind substrate. The Proton acceptor role is filled by His96. Asp118 is a Mg(2+) binding site. Gln241 contributes to the substrate binding site. Asp269 is a Mg(2+) binding site. Residue Glu313–Gln315 participates in substrate binding. 2 residues coordinate ATP: Asp495 and Gly532. Asn533 serves as a coordination point for Mg(2+). Substrate is bound at residue Ser535.

Belongs to the FGAMS family. Monomer. Part of the FGAM synthase complex composed of 1 PurL, 1 PurQ and 2 PurS subunits.

It localises to the cytoplasm. The enzyme catalyses N(2)-formyl-N(1)-(5-phospho-beta-D-ribosyl)glycinamide + L-glutamine + ATP + H2O = 2-formamido-N(1)-(5-O-phospho-beta-D-ribosyl)acetamidine + L-glutamate + ADP + phosphate + H(+). Its pathway is purine metabolism; IMP biosynthesis via de novo pathway; 5-amino-1-(5-phospho-D-ribosyl)imidazole from N(2)-formyl-N(1)-(5-phospho-D-ribosyl)glycinamide: step 1/2. Functionally, part of the phosphoribosylformylglycinamidine synthase complex involved in the purines biosynthetic pathway. Catalyzes the ATP-dependent conversion of formylglycinamide ribonucleotide (FGAR) and glutamine to yield formylglycinamidine ribonucleotide (FGAM) and glutamate. The FGAM synthase complex is composed of three subunits. PurQ produces an ammonia molecule by converting glutamine to glutamate. PurL transfers the ammonia molecule to FGAR to form FGAM in an ATP-dependent manner. PurS interacts with PurQ and PurL and is thought to assist in the transfer of the ammonia molecule from PurQ to PurL. This Rhizobium leguminosarum bv. trifolii (strain WSM2304) protein is Phosphoribosylformylglycinamidine synthase subunit PurL.